Reading from the N-terminus, the 504-residue chain is Maturase K (504 aa).

Belongs to the intron maturase 2 family. MatK subfamily.

The protein resides in the plastid. Its subcellular location is the chloroplast. In terms of biological role, usually encoded in the trnK tRNA gene intron. Probably assists in splicing its own and other chloroplast group II introns. The polypeptide is Maturase K (Guizotia abyssinica (Niger)).